Reading from the N-terminus, the 501-residue chain is Lysine--tRNA ligase (501 aa).

Glu-411 and Glu-418 together coordinate Mg(2+).

This sequence belongs to the class-II aminoacyl-tRNA synthetase family. In terms of assembly, homodimer. Mg(2+) is required as a cofactor.

It is found in the cytoplasm. The enzyme catalyses tRNA(Lys) + L-lysine + ATP = L-lysyl-tRNA(Lys) + AMP + diphosphate. The sequence is that of Lysine--tRNA ligase from Pseudomonas aeruginosa (strain ATCC 15692 / DSM 22644 / CIP 104116 / JCM 14847 / LMG 12228 / 1C / PRS 101 / PAO1).